The following is a 688-amino-acid chain: Elongation factor G (688 aa).

In terms of domain architecture, tr-type G spans 6–280 (KLFRNFGIMA…AVVDFLPSPI (275 aa)). Residues 15 to 22 (AHIDAGKT), 79 to 83 (DTPGH), and 133 to 136 (NKMD) each bind GTP.

The protein belongs to the TRAFAC class translation factor GTPase superfamily. Classic translation factor GTPase family. EF-G/EF-2 subfamily.

Its subcellular location is the cytoplasm. In terms of biological role, catalyzes the GTP-dependent ribosomal translocation step during translation elongation. During this step, the ribosome changes from the pre-translocational (PRE) to the post-translocational (POST) state as the newly formed A-site-bound peptidyl-tRNA and P-site-bound deacylated tRNA move to the P and E sites, respectively. Catalyzes the coordinated movement of the two tRNA molecules, the mRNA and conformational changes in the ribosome. This Ureaplasma parvum serovar 3 (strain ATCC 27815 / 27 / NCTC 11736) protein is Elongation factor G.